Reading from the N-terminus, the 1202-residue chain is Adenine-specific methyltransferase PglX (1202 aa).

It belongs to the methyltransferase superfamily. PglX adenine methyltransferase family.

It catalyses the reaction a 2'-deoxyadenosine in DNA + S-adenosyl-L-methionine = an N(6)-methyl-2'-deoxyadenosine in DNA + S-adenosyl-L-homocysteine + H(+). Its function is as follows. BREX systems (bacteriophage exclusion) provide immunity against bacteriophage. Part of a type 1 BREX system which protects against dsDNA phage. This system allows phage adsorption but prevents phage DNA replication, without degradation of the phage DNA. Methylation of bacterial DNA by this protein guides self/non-self discrimination. Functionally, probably methylates the adenine in the fifth position of the hexamer 5'-ACRCAG-3' in genomic DNA. N(6)-methylated adenine on the fifth position of 5'-ACRCAG-3' is found in the genome; there are 1906 sites in the genomic DNA. In Lacticaseibacillus casei (strain Zhang) (Lactobacillus casei), this protein is Adenine-specific methyltransferase PglX.